A 233-amino-acid chain; its full sequence is 2,3,4,5-tetrahydropyridine-2,6-dicarboxylate N-acetyltransferase (233 aa).

It belongs to the transferase hexapeptide repeat family. DapH subfamily.

It catalyses the reaction (S)-2,3,4,5-tetrahydrodipicolinate + acetyl-CoA + H2O = L-2-acetamido-6-oxoheptanedioate + CoA. It participates in amino-acid biosynthesis; L-lysine biosynthesis via DAP pathway; LL-2,6-diaminopimelate from (S)-tetrahydrodipicolinate (acetylase route): step 1/3. Functionally, catalyzes the transfer of an acetyl group from acetyl-CoA to tetrahydrodipicolinate. In Oenococcus oeni (strain ATCC BAA-331 / PSU-1), this protein is 2,3,4,5-tetrahydropyridine-2,6-dicarboxylate N-acetyltransferase.